Here is a 154-residue protein sequence, read N- to C-terminus: Myoglobin (154 aa).

Residues 2-148 (GLSDQEWQQV…FRNDMASKYK (147 aa)) form the Globin domain. His-65 provides a ligand contact to nitrite. His-65 contacts O2. His-94 serves as a coordination point for heme b.

It belongs to the globin family. In terms of assembly, monomeric.

Its subcellular location is the cytoplasm. The protein localises to the sarcoplasm. It carries out the reaction Fe(III)-heme b-[protein] + nitric oxide + H2O = Fe(II)-heme b-[protein] + nitrite + 2 H(+). It catalyses the reaction H2O2 + AH2 = A + 2 H2O. Monomeric heme protein which primary function is to store oxygen and facilitate its diffusion within muscle tissues. Reversibly binds oxygen through a pentacoordinated heme iron and enables its timely and efficient release as needed during periods of heightened demand. Depending on the oxidative conditions of tissues and cells, and in addition to its ability to bind oxygen, it also has a nitrite reductase activity whereby it regulates the production of bioactive nitric oxide. Under stress conditions, like hypoxia and anoxia, it also protects cells against reactive oxygen species thanks to its pseudoperoxidase activity. This Gallus gallus (Chicken) protein is Myoglobin (MB).